The following is a 3433-amino-acid chain: Genome polyprotein (3433 aa).

An interaction with host EXOC1 region spans residues 2–15 (SKKPGGPGKSRAVN). Topologically, residues 2–105 (SKKPGGPGKS…NRRSSKQKKR (104 aa)) are cytoplasmic. Residues 37–72 (LIDGRGPTRFVLALLAFFRFTAIAPTRAVLDRWRSV) are hydrophobic; homodimerization of capsid protein C. The propeptide at 106–123 (GGKTGIAFMIGLIAGVGA) is ER anchor for the capsid protein C, removed in mature form by serine protease NS3. A helical membrane pass occupies residues 106–126 (GGKTGIAFMIGLIAGVGAVTL). Over 127 to 248 (SNFQGKVMMT…KATRYLVKTE (122 aa)) the chain is Extracellular. An N-linked (GlcNAc...) asparagine; by host glycan is attached at N138. A helical transmembrane segment spans residues 249–269 (SWILRNPGYALVAAVIGWMLG). The Cytoplasmic segment spans residues 270–273 (SNTM). The helical transmembrane segment at 274 to 290 (QRVVFAVLLLLVAPAYS) threads the bilayer. At 291 to 743 (FNCLGMSNRD…QVFGGAFRSL (453 aa)) the chain is on the extracellular side. Disulfide bonds link C293–C320, C350–C406, C364–C395, and C382–C411. The fusion peptide stretch occupies residues 388–401 (DRGWGNGCGLFGKG). N-linked (GlcNAc...) asparagine; by host glycosylation occurs at N444. 2 disulfides stabilise this stretch: C480–C578 and C595–C626. The helical transmembrane segment at 744–764 (FGGMSWITQGLLGALLLWMGI) threads the bilayer. Topologically, residues 765–770 (NARDRS) are cytoplasmic. Residues 771–791 (IALTFLAVGGVLLFLSVNVHA) form a helical membrane-spanning segment. Over 792–1216 (DTGCAIDISR…AFAESNSGGD (425 aa)) the chain is Extracellular. 2 cysteine pairs are disulfide-bonded: C795–C806 and C846–C934. 3 N-linked (GlcNAc...) asparagine; by host glycosylation sites follow: N921, N966, and N998. Disulfide bonds link C970–C1014, C1071–C1120, C1082–C1103, and C1104–C1107. The helical transmembrane segment at 1217-1237 (VVHLALMATFKIQPVFMVASF) threads the bilayer. Topologically, residues 1238–1247 (LKARWTNQEN) are cytoplasmic. Residues 1248 to 1268 (ILLMLAAAFFQMAYYDARQIL) traverse the membrane as a helical segment. Over 1269 to 1288 (LWEMPDVLNSLAVAWMILRA) the chain is Lumenal. A helical membrane pass occupies residues 1289–1309 (ITFTTTSNVVVPLLALLTPGL). The Cytoplasmic segment spans residues 1310–1316 (RCLNLDV). Residues 1317–1335 (YRILLLMVGIGSLIREKRS) form a helical membrane-spanning segment. Residues 1336–1345 (AAAKKKGASL) lie on the Lumenal side of the membrane. Residues 1346–1366 (LCLALASTGFFNPMILAAGLV) form a helical membrane-spanning segment. The Cytoplasmic segment spans residues 1367–1375 (ACDPNRKRG). A helical membrane pass occupies residues 1376–1396 (WPATEVMTAVGLMFAIVGGLA). At 1397-1399 (ELD) the chain is on the lumenal side. The chain crosses the membrane as a helical span at residues 1400 to 1420 (IDSMAIPMTIAGLMFAAFVIS). The Cytoplasmic segment spans residues 1421 to 1477 (GKSTDMWIERTADISWEGDAEITGSSERVDVRLDDDGNFQLMNDPGAPWKIWMLRMA). Positions 1428–1467 (IERTADISWEGDAEITGSSERVDVRLDDDGNFQLMNDPGA) are interacts with and activates NS3 protease. Residues 1478–1498 (CLAISAYTPWAILPSVVGFWI) constitute an intramembrane region (helical). The Cytoplasmic portion of the chain corresponds to 1499–2174 (TLQYTKRGGV…RMALEELPDA (676 aa)). In terms of domain architecture, Peptidase S7 spans 1506–1683 (GGVLWDTPSP…ERMDEPVPAG (178 aa)). Catalysis depends on charge relay system; for serine protease NS3 activity residues H1556, D1580, and S1640. The Helicase ATP-binding domain maps to 1686 to 1842 (PEMLRKKQIT…ESNAPISDLQ (157 aa)). Residues 1690–1693 (RKKQ) form an important for RNA-binding region. Residue 1699-1706 (LHPGAGKT) participates in ATP binding. The DEAH box signature appears at 1790–1793 (DEAH). Residues 1853-2018 (GYEWITEYIG…GLIAQFYQPE (166 aa)) form the Helicase C-terminal domain. The residue at position 1894 (K1894) is an N6-acetyllysine; by host. The segment at 2169–2173 (EELPD) is regulates the ATPase activity of NS3 helicase. The helical transmembrane segment at 2175 to 2195 (LQTIALIALLSVMTMGVFFLL) threads the bilayer. The Lumenal segment spans residues 2196–2200 (MQRKG). Residues 2201 to 2221 (IGKIGLGGVVLGAATFFCWMA) constitute an intramembrane region (helical). Residue E2222 is a topological domain, lumenal. Residues 2223–2243 (VPGTKIAGMLLLSLLLMIVLI) traverse the membrane as a helical segment. Over 2244-2258 (PEPEKQRSQTDNQLA) the chain is Cytoplasmic. Residues 2259 to 2273 (VFLICVLTLVGAVAA) traverse the membrane as a helical segment. Topologically, residues 2274 to 2312 (NEMGWLDKTKSDISGLFGQRIETKENFSIGEFLLDLRPA) are lumenal. Positions 2313-2333 (TAWSLYAVTTAVLTPLLKHLI) form an intramembrane region, helical. The Lumenal segment spans residues 2334–2380 (TSDYITTSLTSINVQASALFTLARGFPFVDVGVSALLLAAGCWGQVT). A helical transmembrane segment spans residues 2381–2401 (LTVTVTSATLLFCHYAYMVPG). Residues 2402–2444 (WQAEAMRSAQRRTAAGIMKNAVVDGIVATDVPELERTTPIMQK) lie on the Cytoplasmic side of the membrane. The chain crosses the membrane as a helical span at residues 2445 to 2465 (KVGQVMLILVSLAALVVNPSV). Topologically, residues 2466 to 2470 (KTVRE) are lumenal. The chain crosses the membrane as a helical span at residues 2471 to 2491 (AGILITAAAVTLWENGASSVW). Over 2492–3433 (NATTAIGLCH…DTTLVEDTVL (942 aa)) the chain is Cytoplasmic. One can recognise an mRNA cap 0-1 NS5-type MT domain in the interval 2529–2794 (GGAKGRTLGE…DVNLGSGTRA (266 aa)). S2584 provides a ligand contact to S-adenosyl-L-methionine. S2584 is subject to Phosphoserine. K2589 serves as the catalytic For 2'-O-MTase activity. Positions 2614, 2615, 2632, 2633, 2659, and 2660 each coordinate S-adenosyl-L-methionine. Residue D2674 is the For 2'-O-MTase activity of the active site. Residue I2675 participates in S-adenosyl-L-methionine binding. Catalysis depends on for 2'-O-MTase activity residues K2710 and E2746. Residue Y2748 participates in S-adenosyl-L-methionine binding. Residues 2917–2919 (REK) carry the Nuclear localization signal motif. Zn(2+) contacts are provided by E2968, H2972, C2977, and C2980. The RdRp catalytic domain occupies 3058–3210 (GRIYADDTAG…KPLDDRFATS (153 aa)). 3 residues coordinate Zn(2+): H3245, C3261, and C3380. The PDZ-binding signature appears at 3431–3433 (TVL).

It in the N-terminal section; belongs to the class I-like SAM-binding methyltransferase superfamily. mRNA cap 0-1 NS5-type methyltransferase family. As to quaternary structure, homodimer; further assembles as a homotetramer. Interacts (via N-terminus) with host EXOC1 (via C-terminus); this interaction results in EXOC1 degradation through the proteasome degradation pathway. In terms of assembly, forms heterodimers with envelope protein E in the endoplasmic reticulum and Golgi. Homodimer; in the endoplasmic reticulum and Golgi. Interacts with protein prM. Interacts with non-structural protein 1. As to quaternary structure, homodimer; Homohexamer when secreted. Interacts with envelope protein E. NS1 interacts with NS4B. Interacts with host complement protein CFH; this interaction leads to the degradation of C3. In terms of assembly, interacts (via N-terminus) with serine protease NS3. Forms a heterodimer with serine protease NS3. May form homooligomers. As to quaternary structure, forms a heterodimer with NS2B. Interacts with non-structural protein 2A (via N-terminus). Interacts with NS4B. Interacts with unphosphorylated RNA-directed RNA polymerase NS5; this interaction stimulates RNA-directed RNA polymerase NS5 guanylyltransferase activity. In terms of assembly, interacts with Serine protease/Helicase NS3. Interacts with NS1. Homodimer. Interacts with host STAT2; this interaction inhibits the phosphorylation of the latter, and, when all viral proteins are present (polyprotein), targets STAT2 for degradation. Interacts with serine protease NS3. In terms of processing, specific enzymatic cleavages in vivo yield mature proteins. Cleavages in the lumen of endoplasmic reticulum are performed by host signal peptidase, whereas cleavages in the cytoplasmic side are performed by serine protease NS3. Signal cleavage at the 2K-4B site requires a prior NS3 protease-mediated cleavage at the 4A-2K site. Cleaved in post-Golgi vesicles by a host furin, releasing the mature small envelope protein M, and peptide pr. This cleavage is incomplete as up to 30% of viral particles still carry uncleaved prM. Post-translationally, N-glycosylated. In terms of processing, N-glycosylated. The excreted form is glycosylated and this is required for efficient secretion of the protein from infected cells. Acetylated by host KAT5. Acetylation modulates NS3 RNA-binding and unwinding activities and plays an important positive role for viral replication. Post-translationally, phosphorylated on serines residues. This phosphorylation may trigger NS5 nuclear localization.

It is found in the virion. It localises to the host nucleus. The protein resides in the host cytoplasm. The protein localises to the host perinuclear region. Its subcellular location is the secreted. It is found in the virion membrane. It localises to the host endoplasmic reticulum membrane. The catalysed reaction is Selective hydrolysis of -Xaa-Xaa-|-Yaa- bonds in which each of the Xaa can be either Arg or Lys and Yaa can be either Ser or Ala.. The enzyme catalyses RNA(n) + a ribonucleoside 5'-triphosphate = RNA(n+1) + diphosphate. It catalyses the reaction a ribonucleoside 5'-triphosphate + H2O = a ribonucleoside 5'-diphosphate + phosphate + H(+). It carries out the reaction ATP + H2O = ADP + phosphate + H(+). The catalysed reaction is a 5'-end (5'-triphosphoguanosine)-ribonucleoside in mRNA + S-adenosyl-L-methionine = a 5'-end (N(7)-methyl 5'-triphosphoguanosine)-ribonucleoside in mRNA + S-adenosyl-L-homocysteine. The enzyme catalyses a 5'-end (N(7)-methyl 5'-triphosphoguanosine)-ribonucleoside in mRNA + S-adenosyl-L-methionine = a 5'-end (N(7)-methyl 5'-triphosphoguanosine)-(2'-O-methyl-ribonucleoside) in mRNA + S-adenosyl-L-homocysteine + H(+). Functionally, plays a role in virus budding by binding to the cell membrane and gathering the viral RNA into a nucleocapsid that forms the core of a mature virus particle. During virus entry, may induce genome penetration into the host cytoplasm after hemifusion induced by the surface proteins. Can migrate to the cell nucleus where it modulates host functions. Overcomes the anti-viral effects of host EXOC1 by sequestering and degrading the latter through the proteasome degradation pathway. Inhibits RNA silencing by interfering with host Dicer. In terms of biological role, prevents premature fusion activity of envelope proteins in trans-Golgi by binding to envelope protein E at pH6.0. After virion release in extracellular space, gets dissociated from E dimers. Its function is as follows. Acts as a chaperone for envelope protein E during intracellular virion assembly by masking and inactivating envelope protein E fusion peptide. prM is the only viral peptide matured by host furin in the trans-Golgi network probably to avoid catastrophic activation of the viral fusion activity in acidic Golgi compartment prior to virion release. prM-E cleavage is inefficient, and many virions are only partially matured. These uncleaved prM would play a role in immune evasion. Functionally, may play a role in virus budding. Exerts cytotoxic effects by activating a mitochondrial apoptotic pathway through M ectodomain. May display a viroporin activity. Binds to host cell surface receptor and mediates fusion between viral and cellular membranes. Envelope protein is synthesized in the endoplasmic reticulum in the form of heterodimer with protein prM. They play a role in virion budding in the ER, and the newly formed immature particle is covered with 60 spikes composed of heterodimer between precursor prM and envelope protein E. The virion is transported to the Golgi apparatus where the low pH causes dissociation of PrM-E heterodimers and formation of E homodimers. prM-E cleavage is inefficient, and many virions are only partially matured. These uncleaved prM would play a role in immune evasion. In terms of biological role, involved in immune evasion, pathogenesis and viral replication. Once cleaved off the polyprotein, is targeted to three destinations: the viral replication cycle, the plasma membrane and the extracellular compartment. Essential for viral replication. Required for formation of the replication complex and recruitment of other non-structural proteins to the ER-derived membrane structures. Excreted as a hexameric lipoparticle that plays a role against host immune response. Antagonizing the complement function. Binds to the host macrophages and dendritic cells. Inhibits signal transduction originating from Toll-like receptor 3 (TLR3). Its function is as follows. Component of the viral RNA replication complex that functions in virion assembly and antagonizes the host alpha/beta interferon antiviral response. Inhibits STAT2 translocation in the nucleus after IFN-alpha treatment. Functionally, required cofactor for the serine protease function of NS3. May have membrane-destabilizing activity and form viroporins. Inhibits STAT2 translocation in the nucleus after IFN-alpha treatment. Displays three enzymatic activities: serine protease, NTPase and RNA helicase. NS3 serine protease, in association with NS2B, performs its autocleavage and cleaves the polyprotein at dibasic sites in the cytoplasm: C-prM, NS2A-NS2B, NS2B-NS3, NS3-NS4A, NS4A-2K and NS4B-NS5. NS3 RNA helicase binds RNA and unwinds dsRNA in the 3' to 5' direction. NS3 supports the separation of RNA daughter and template strands during viral replication. The helicase part is involved in the inhibition of phosphorylation of host STAT1, and thereby inhibition of host type-I IFN signaling. In addition, NS3 assists the initiation of replication by unwinding the RNA secondary structure in the 3' non-translated region (NTR). Inhibits STAT2 translocation in the nucleus after IFN-alpha treatment. In terms of biological role, regulates the ATPase activity of the NS3 helicase activity. NS4A allows NS3 helicase to conserve energy during unwinding. Induces host ER membrane rearrangements to provide a compartment where viral replication can take part. Inhibits STAT2 translocation in the nucleus after IFN-alpha treatment. Its function is as follows. Functions as a signal peptide for NS4B and is required for the interferon antagonism activity of the latter. Functionally, induces the formation of ER-derived membrane vesicles where the viral replication takes place. Inhibits interferon (IFN)-induced host STAT1 phosphorylation and nuclear translocation, thereby preventing the establishment of cellular antiviral state by blocking the IFN-alpha/beta pathway. Inhibits STAT2 translocation in the nucleus after IFN-alpha treatment. Replicates the viral (+) and (-) genome, and performs the capping of genomes in the cytoplasm. NS5 methylates viral RNA cap at guanine N-7 and ribose 2'-O positions. Besides its role in genome replication, also prevents the establishment of cellular antiviral state by blocking the interferon-alpha/beta (IFN-alpha/beta) signaling pathway. Inhibits host JAK1 and TYK2 phosphorylation, thereby preventing activation of JAK-STAT signaling pathway. May transcriptionally regulate host genes involved in antiviral response when localized in the nucleus. The chain is Genome polyprotein from Ciconiiformes (storks and others).